The primary structure comprises 127 residues: Evasin-4 (127 aa).

The signal sequence occupies residues 1–23; sequence MAFKYWFVFAAVLYARQWLSTKC. Disulfide bonds link Cys-50/Cys-69, Cys-65/Cys-112, Cys-86/Cys-117, and Cys-107/Cys-126. 7 N-linked (GlcNAc...) asparagine glycosylation sites follow: Asn-54, Asn-64, Asn-70, Asn-77, Asn-83, Asn-106, and Asn-114.

It belongs to the evasin C8 family. Monomer.

It localises to the secreted. Salivary chemokine-binding protein which has chemokine-neutralizing activity and binds to host chemokines CCL1, CCL3, CCL5, CCL7, CCL8, CCL11, CCL14, CCL15, CCL16, CCL17, CCL18, CCL19, CCL21, CCL22, CCL23, CCL24, CCL25 and CCL26 with nanomolar affinity. Binds to CCL3 and CCL5 with 1:1 stoichiometry. Although binding to CCL25 is observed, does not inhibit CCL25-induced chemotaxis. Has been shown to reduce cardiac injury and inflammation in mice through its anti-CCL5 activity. The sequence is that of Evasin-4 from Rhipicephalus sanguineus (Brown dog tick).